We begin with the raw amino-acid sequence, 61 residues long: Proteinase inhibitor (61 aa).

The BPTI/Kunitz inhibitor domain maps to 8-58 (CTSPPVTGPCRAGFKRYNYNTRTKQCEPFKYGGCKGNGNRYKSEQDCLDAC). 3 cysteine pairs are disulfide-bonded: cysteine 8-cysteine 58, cysteine 17-cysteine 41, and cysteine 33-cysteine 54.

Its subcellular location is the secreted. In terms of biological role, inhibitor of trypsin and chymotrypsin. The chain is Proteinase inhibitor from Tachypleus tridentatus (Japanese horseshoe crab).